The chain runs to 329 residues: Probable endo-beta-1,4-glucanase B (329 aa).

Positions 1–18 (MKFGSIVLIAAAAGSAVA) are cleaved as a signal peptide. N-linked (GlcNAc...) asparagine glycosylation is found at Asn33 and Asn96. The Proton donor role is filled by Glu156. The active-site Nucleophile is Glu263.

The protein belongs to the glycosyl hydrolase 5 (cellulase A) family.

The protein resides in the secreted. The catalysed reaction is Endohydrolysis of (1-&gt;4)-beta-D-glucosidic linkages in cellulose, lichenin and cereal beta-D-glucans.. Its function is as follows. Has endoglucanase activity on substrates containing beta-1,4 glycosidic bonds, like in carboxymethylcellulose (CMC), hydroxyethylcellulose (HEC) and beta-glucan. Involved in the degradation of complex natural cellulosic substrates. This is Probable endo-beta-1,4-glucanase B (eglB) from Neosartorya fischeri (strain ATCC 1020 / DSM 3700 / CBS 544.65 / FGSC A1164 / JCM 1740 / NRRL 181 / WB 181) (Aspergillus fischerianus).